The primary structure comprises 476 residues: Protein DETOXIFICATION 1 (476 aa).

A run of 12 helical transmembrane segments spans residues 35–55 (AAPM…SVMV), 66–86 (GVAL…CGLV), 117–137 (IPIC…LISL), 146–166 (IAGS…IVIP), 184–204 (AVTT…LFGL), 208–228 (GPAM…SCYV), 260–280 (AAMI…SGLL), 289–309 (VLSI…GVAA), 331–351 (VLAG…LLFT), 370–390 (VADL…TAVL), 402–422 (IGAW…GIYL), and 433–453 (LWCG…IVTA).

It belongs to the multi antimicrobial extrusion (MATE) (TC 2.A.66.1) family. Ubiquitous. Highest expression in flowers and stems.

Its subcellular location is the cell membrane. Functionally, efflux carrier for plant-derived alkaloids, antibiotics, heavy metal and other toxic compounds. Involved in cadmium detoxification. Requires probably a proton-motive force for the efflux. The protein is Protein DETOXIFICATION 1 of Arabidopsis thaliana (Mouse-ear cress).